The primary structure comprises 620 residues: Somatic embryogenesis receptor kinase 4 (620 aa).

An N-terminal signal peptide occupies residues 1-33 (MTSSKMEQRSLLCFLYLLLLFNFTLRVAGNAEG). The Extracellular segment spans residues 34 to 234 (DALTQLKNSL…GGQMTAAIAG (201 aa)). LRR repeat units follow at residues 100–122 (NLQY…LGDL), 124–146 (ELVS…LGKL), 148–170 (KLRF…LTSV), 171–193 (QLQV…GSFS), and 194–215 (LFTP…PPTS). Asparagine 110 carries N-linked (GlcNAc...) asparagine glycosylation. Asparagine 156, asparagine 189, and asparagine 202 each carry an N-linked (GlcNAc...) asparagine glycan. Residues 205–227 (LTDLPEPPPTSTSPTPPPPSGGQ) are disordered. A compositionally biased stretch (pro residues) spans 209-224 (PEPPPTSTSPTPPPPS). A helical membrane pass occupies residues 235-255 (GVAAGAALLFAVPAIAFAWWL). Over 256-620 (RRKPQDHFFD…IENDYPSGPR (365 aa)) the chain is Cytoplasmic. The residue at position 291 (threonine 291) is a Phosphothreonine. Residues 294–591 (FSNKNVLGRG…KEEMPIHDFN (298 aa)) enclose the Protein kinase domain. Serine 295 is modified (phosphoserine). ATP-binding positions include 300-308 (LGRGGFGKV) and lysine 322. A phosphoserine mark is found at serine 375 and serine 378. Residue aspartate 421 is the Proton acceptor of the active site. A phosphothreonine mark is found at threonine 454, threonine 455, and threonine 460. Tyrosine 468 bears the Phosphotyrosine mark. Residue serine 470 is modified to Phosphoserine. Threonine 471 carries the post-translational modification Phosphothreonine. At serine 475 the chain carries Phosphoserine. Threonine 551 carries the post-translational modification Phosphothreonine.

It belongs to the protein kinase superfamily. Ser/Thr protein kinase family. In terms of assembly, interacts with the EF-Tu receptor EFR and FLS2 in a specific ligand-induced manner. Interacts with TMK4/BARK1. Interacts with ERECTA in a EPF2-induced manner. Interacts with ERL1 in a EPF1-induced manner. Interacts with TMM. Forms a complex with MIK2 in response to SCOOP12 perception. Autophosphorylated on Thr and Tyr residues.

It is found in the cell membrane. It catalyses the reaction L-seryl-[protein] + ATP = O-phospho-L-seryl-[protein] + ADP + H(+). The enzyme catalyses L-threonyl-[protein] + ATP = O-phospho-L-threonyl-[protein] + ADP + H(+). The catalysed reaction is L-tyrosyl-[protein] + ATP = O-phospho-L-tyrosyl-[protein] + ADP + H(+). In terms of biological role, dual specificity kinase acting on both serine/threonine- and tyrosine-containing substrates. Positively regulates the BR-dependent plant growth pathway and negatively regulates the BR-independent cell-death pathway. Required during SCOOP small peptides (e.g. SCOOP10 and SCOOP12) perception and signaling; associates with MIK2 as a coreceptor upon MIK2 perception of SCOOP peptides, and relays the signaling through the activation of receptor-like cytosolic kinases (RLCKs) BIK1 and PBL1. The polypeptide is Somatic embryogenesis receptor kinase 4 (Arabidopsis thaliana (Mouse-ear cress)).